Reading from the N-terminus, the 132-residue chain is Photosystem II extrinsic protein U (132 aa).

Residues 1–29 form the signal peptide; the sequence is MKRLLSWLTGALVMAGLLSSLVLPSAVYA.

It belongs to the PsbU family. PSII is composed of 1 copy each of membrane proteins PsbA, PsbB, PsbC, PsbD, PsbE, PsbF, PsbH, PsbI, PsbJ, PsbK, PsbL, PsbM, PsbT, PsbX, PsbY, PsbZ, Psb30/Ycf12, peripheral proteins PsbO, CyanoQ (PsbQ), PsbU, PsbV and a large number of cofactors. It forms dimeric complexes.

The protein resides in the cellular thylakoid membrane. Functionally, one of the extrinsic, lumenal subunits of photosystem II (PSII). PSII is a light-driven water plastoquinone oxidoreductase, using light energy to abstract electrons from H(2)O, generating a proton gradient subsequently used for ATP formation. The extrinsic proteins stabilize the structure of photosystem II oxygen-evolving complex (OEC), the ion environment of oxygen evolution and protect the OEC against heat-induced inactivation. The protein is Photosystem II extrinsic protein U of Synechococcus sp. (strain CC9902).